The sequence spans 232 residues: 5'-methylthioadenosine/S-adenosylhomocysteine nucleosidase (232 aa).

Glutamate 12 serves as the catalytic Proton acceptor. Residues glycine 78, methionine 153, and 174-175 (ME) contribute to the substrate site. Aspartate 198 acts as the Proton donor in catalysis.

The protein belongs to the PNP/UDP phosphorylase family. MtnN subfamily.

It catalyses the reaction S-adenosyl-L-homocysteine + H2O = S-(5-deoxy-D-ribos-5-yl)-L-homocysteine + adenine. It carries out the reaction S-methyl-5'-thioadenosine + H2O = 5-(methylsulfanyl)-D-ribose + adenine. The enzyme catalyses 5'-deoxyadenosine + H2O = 5-deoxy-D-ribose + adenine. It functions in the pathway amino-acid biosynthesis; L-methionine biosynthesis via salvage pathway; S-methyl-5-thio-alpha-D-ribose 1-phosphate from S-methyl-5'-thioadenosine (hydrolase route): step 1/2. In terms of biological role, catalyzes the irreversible cleavage of the glycosidic bond in both 5'-methylthioadenosine (MTA) and S-adenosylhomocysteine (SAH/AdoHcy) to adenine and the corresponding thioribose, 5'-methylthioribose and S-ribosylhomocysteine, respectively. Also cleaves 5'-deoxyadenosine, a toxic by-product of radical S-adenosylmethionine (SAM) enzymes, into 5-deoxyribose and adenine. The polypeptide is 5'-methylthioadenosine/S-adenosylhomocysteine nucleosidase (Hydrogenovibrio crunogenus (strain DSM 25203 / XCL-2) (Thiomicrospira crunogena)).